The chain runs to 149 residues: Arginine repressor (149 aa).

The protein belongs to the ArgR family.

Its subcellular location is the cytoplasm. It functions in the pathway amino-acid biosynthesis; L-arginine biosynthesis [regulation]. Its function is as follows. Regulates arginine biosynthesis genes. This Alkaliphilus metalliredigens (strain QYMF) protein is Arginine repressor.